A 102-amino-acid polypeptide reads, in one-letter code: A-type ATP synthase subunit F (102 aa).

It belongs to the V-ATPase F subunit family. In terms of assembly, has multiple subunits with at least A(3), B(3), C, D, E, F, H, I and proteolipid K(x).

It is found in the cell membrane. In terms of biological role, component of the A-type ATP synthase that produces ATP from ADP in the presence of a proton gradient across the membrane. This Thermococcus gammatolerans (strain DSM 15229 / JCM 11827 / EJ3) protein is A-type ATP synthase subunit F.